The primary structure comprises 78 residues: Conotoxin ArMKLT2-0312 (78 aa).

An N-terminal signal peptide occupies residues Met1–Ala22. Positions Asp23 to Val45 are excised as a propeptide. Position 48 is a pyrrolidone carboxylic acid (Gln48). Intrachain disulfides connect Cys49–Cys62, Cys56–Cys67, and Cys61–Cys75.

The protein belongs to the conotoxin O1 superfamily. In terms of tissue distribution, expressed by the venom duct.

The protein localises to the secreted. This chain is Conotoxin ArMKLT2-0312, found in Conus arenatus (Sand-dusted cone).